Reading from the N-terminus, the 308-residue chain is Beta-1,3-galactosyltransferase 5 (308 aa).

Over 1–7 the chain is Cytoplasmic; it reads MAHMKTR. A helical; Signal-anchor for type II membrane protein membrane pass occupies residues 8–25; the sequence is LVYASILMMGALCLYFSM. Residues 26-308 are Lumenal-facing; sequence DSFRELPFVF…NSKEQDCPAV (283 aa). Asparagine 128, asparagine 172, and asparagine 229 each carry an N-linked (GlcNAc...) asparagine glycan.

Belongs to the glycosyltransferase 31 family. Expressed in brain and kidney.

It localises to the golgi apparatus membrane. The enzyme catalyses a globoside Gb4Cer (d18:1(4E)) + UDP-alpha-D-galactose = a globoside GalGb4Cer (d18:1(4E)) + UDP + H(+). It functions in the pathway protein modification; protein glycosylation. Catalyzes the transfer of Gal to GlcNAc-based acceptors with a preference for the core3 O-linked glycan GlcNAc(beta1,3)GalNAc structure. Can use glycolipid LC3Cer as an efficient acceptor. Also catalyzes the transfer of Gal to the terminal GalNAc unit of the globoside GB4, thereby synthesizing the glycolipid GB5, also known as the stage-specific embryonic antigen-3 (SSEA-3). In Mus musculus (Mouse), this protein is Beta-1,3-galactosyltransferase 5.